The following is a 177-amino-acid chain: MPGSLKEETALLLEDYFQHRAGGAALPPSATAAELRRAAAELERRERPFFRSCAPLARAEPREAAALLRKVAAQLEAEGGLNWGRLLALVVFTGTLAAALAESGCEEGPSRLAAALAAYLAEEQGEWLEEHGGWDGFCRFFGRHGSQPADQNSTLSNAIMAAAGFGIAGLAFLLVVR.

The BH1 motif lies at 75-94 (LEAEGGLNWGRLLALVVFTG). A helical transmembrane segment spans residues 86–106 (LLALVVFTGTLAAALAESGCE). The BH2 signature appears at 126 to 141 (EWLEEHGGWDGFCRFF). The chain crosses the membrane as a helical span at residues 156-176 (SNAIMAAAGFGIAGLAFLLVV).

The protein belongs to the Bcl-2 family. In terms of assembly, interacts with BAX. As to expression, expressed preferentially in heart, skeletal muscle, retina, optical tectum and bursa of Fabricius.

The protein resides in the cell membrane. Shows anti-apoptotic properties. Counteract the pro-apoptotic activity of BAX. The sequence is that of Anti-apoptotic protein NR13 (NR13) from Gallus gallus (Chicken).